The chain runs to 458 residues: Na(+)/H(+) antiporter NhaA (458 aa).

Transmembrane regions (helical) follow at residues 27-47, 78-98, 114-134, 143-163, 172-192, 201-221, 222-242, 249-269, 316-336, 346-366, 388-408, and 421-441; these read FLHV…AALI, LHFW…GMEI, ILPI…YLSF, GWAV…ALLG, VILL…IAFF, GLAI…IGLA, SAWL…ITGV, VILG…PLTI, PWVA…VSFA, FLVV…GIIT, ILLI…VSML, and IGVL…GLIY.

This sequence belongs to the NhaA Na(+)/H(+) (TC 2.A.33) antiporter family.

The protein resides in the cell inner membrane. It catalyses the reaction Na(+)(in) + 2 H(+)(out) = Na(+)(out) + 2 H(+)(in). Its function is as follows. Na(+)/H(+) antiporter that extrudes sodium in exchange for external protons. This chain is Na(+)/H(+) antiporter NhaA, found in Bartonella quintana (strain Toulouse) (Rochalimaea quintana).